Reading from the N-terminus, the 511-residue chain is Xylose import ATP-binding protein XylG (511 aa).

ABC transporter domains are found at residues 6–244 (LEMR…VGRE) and 261–506 (FEAR…IGKP). 38-45 (GENGAGKS) is a binding site for ATP.

The protein belongs to the ABC transporter superfamily. Xylose importer (TC 3.A.1.2.4) family. The complex is composed of two ATP-binding proteins (XylG), two transmembrane proteins (XylH) and a solute-binding protein (XylF).

It is found in the cell inner membrane. The catalysed reaction is D-xylose(out) + ATP + H2O = D-xylose(in) + ADP + phosphate + H(+). Its function is as follows. Part of the ABC transporter complex XylFGH involved in xylose import. Responsible for energy coupling to the transport system. The chain is Xylose import ATP-binding protein XylG from Brucella abortus (strain 2308).